Reading from the N-terminus, the 23-residue chain is KHTLPDLPYDFGALQPHISAEIM.

This sequence belongs to the iron/manganese superoxide dismutase family. As to quaternary structure, homotetramer. The cofactor is Mn(2+).

It localises to the mitochondrion matrix. It catalyses the reaction 2 superoxide + 2 H(+) = H2O2 + O2. Functionally, destroys superoxide anion radicals which are normally produced within the cells and which are toxic to biological systems. The polypeptide is Superoxide dismutase [Mn], mitochondrial (Aquarana catesbeiana (American bullfrog)).